The primary structure comprises 477 residues: Glycogen synthase (477 aa).

Lysine 15 contributes to the ADP-alpha-D-glucose binding site.

It belongs to the glycosyltransferase 1 family. Bacterial/plant glycogen synthase subfamily.

It carries out the reaction [(1-&gt;4)-alpha-D-glucosyl](n) + ADP-alpha-D-glucose = [(1-&gt;4)-alpha-D-glucosyl](n+1) + ADP + H(+). Its pathway is glycan biosynthesis; glycogen biosynthesis. Synthesizes alpha-1,4-glucan chains using ADP-glucose. This chain is Glycogen synthase, found in Shigella sonnei (strain Ss046).